The chain runs to 299 residues: DNA-binding transcriptional repressor CapW (299 aa).

A disordered region spans residues 1-22; sequence MTDESKPTDDQPTSKGRQGARW. Positions 1–95 are winged HTH domain; it reads MTDESKPTDD…SFKAVFPSSA (95 aa). The WYL domain stretch occupies residues 96-207; the sequence is VERYLDDLLR…LTRIKCCKYV (112 aa). The 81-residue stretch at 131–211 folds into the WYL domain; it reads GRRLNADIVG…KCCKYVGQDR (81 aa). The segment at 156 to 200 is probable ligand-binding region; it reads YQSLTDPEGGERMLSPHALVHDGNRWHVRAYCHKRKAFRDFSLTR. The interval 208-299 is WCX domain; sequence GQDRDRADED…RDEIKDLIQY (92 aa).

As to quaternary structure, homodimer.

Its function is as follows. Transcriptional regulator of a CBASS antivirus system. CBASS (cyclic oligonucleotide-based antiphage signaling system) provides immunity against bacteriophage. The CD-NTase protein synthesizes cyclic nucleotides in response to infection; these serve as specific second messenger signals. The signals activate a diverse range of effectors, leading to bacterial cell death and thus abortive phage infection. A type III CBASS system, part of a Cap17-CapW-CdnC-Cap7-Cap6-Cap18 locus. Binds specifically to palindromes that overlap the -10 site in the promoter of cdnC, found between the genes for divergently transcribed capW and cdnC (cognate DNA). Probably represses transcription bidirectionally from the promoter. This Pseudomonas aeruginosa protein is DNA-binding transcriptional repressor CapW.